A 235-amino-acid chain; its full sequence is tRNA (guanine-N(1)-)-methyltransferase (235 aa).

Residues glycine 114 and 134–139 (VGDYIL) contribute to the S-adenosyl-L-methionine site.

This sequence belongs to the RNA methyltransferase TrmD family. In terms of assembly, homodimer.

It localises to the cytoplasm. The catalysed reaction is guanosine(37) in tRNA + S-adenosyl-L-methionine = N(1)-methylguanosine(37) in tRNA + S-adenosyl-L-homocysteine + H(+). In terms of biological role, specifically methylates guanosine-37 in various tRNAs. This is tRNA (guanine-N(1)-)-methyltransferase from Chelativorans sp. (strain BNC1).